A 261-amino-acid chain; its full sequence is Imidazole glycerol phosphate synthase subunit HisF (261 aa).

Catalysis depends on residues Asp-16 and Asp-135.

Belongs to the HisA/HisF family. Heterodimer of HisH and HisF.

Its subcellular location is the cytoplasm. It catalyses the reaction 5-[(5-phospho-1-deoxy-D-ribulos-1-ylimino)methylamino]-1-(5-phospho-beta-D-ribosyl)imidazole-4-carboxamide + L-glutamine = D-erythro-1-(imidazol-4-yl)glycerol 3-phosphate + 5-amino-1-(5-phospho-beta-D-ribosyl)imidazole-4-carboxamide + L-glutamate + H(+). It functions in the pathway amino-acid biosynthesis; L-histidine biosynthesis; L-histidine from 5-phospho-alpha-D-ribose 1-diphosphate: step 5/9. Functionally, IGPS catalyzes the conversion of PRFAR and glutamine to IGP, AICAR and glutamate. The HisF subunit catalyzes the cyclization activity that produces IGP and AICAR from PRFAR using the ammonia provided by the HisH subunit. This is Imidazole glycerol phosphate synthase subunit HisF from Mycolicibacterium gilvum (strain PYR-GCK) (Mycobacterium gilvum (strain PYR-GCK)).